A 142-amino-acid chain; its full sequence is Universal stress protein C (142 aa).

The protein belongs to the universal stress protein A family.

The protein localises to the cytoplasm. Functionally, required for resistance to DNA-damaging agents. In Salmonella typhimurium (strain LT2 / SGSC1412 / ATCC 700720), this protein is Universal stress protein C (uspC).